A 440-amino-acid chain; its full sequence is Asparagine--tRNA ligase (440 aa).

This sequence belongs to the class-II aminoacyl-tRNA synthetase family. As to quaternary structure, homodimer.

The protein localises to the cytoplasm. The catalysed reaction is tRNA(Asn) + L-asparagine + ATP = L-asparaginyl-tRNA(Asn) + AMP + diphosphate + H(+). This chain is Asparagine--tRNA ligase, found in Chloroflexus aurantiacus (strain ATCC 29364 / DSM 637 / Y-400-fl).